The following is a 321-amino-acid chain: Glucokinase (321 aa).

Residue 8–13 (GDVGGT) participates in ATP binding.

Belongs to the bacterial glucokinase family.

The protein resides in the cytoplasm. The catalysed reaction is D-glucose + ATP = D-glucose 6-phosphate + ADP + H(+). In Salmonella arizonae (strain ATCC BAA-731 / CDC346-86 / RSK2980), this protein is Glucokinase.